The chain runs to 917 residues: Protein translocase subunit SecA 1 (917 aa).

ATP is bound by residues Gln-87, 105-109 (GEGKT), and Asp-507. A disordered region spans residues 866–917 (EKSPESIGEDIEGREHPQKHQPFVRQGEKIGRNDPCPCGSGKKYKQCHGKLN). Residues Cys-901, Cys-903, Cys-912, and His-913 each contribute to the Zn(2+) site. The span at 907–917 (KKYKQCHGKLN) shows a compositional bias: basic residues.

The protein belongs to the SecA family. Monomer and homodimer. Part of the essential Sec protein translocation apparatus which comprises SecA, SecYEG and auxiliary proteins SecDF-YajC and YidC. The cofactor is Zn(2+).

It localises to the cell inner membrane. Its subcellular location is the cytoplasm. It catalyses the reaction ATP + H2O + cellular proteinSide 1 = ADP + phosphate + cellular proteinSide 2.. In terms of biological role, part of the Sec protein translocase complex. Interacts with the SecYEG preprotein conducting channel. Has a central role in coupling the hydrolysis of ATP to the transfer of proteins into and across the cell membrane, serving both as a receptor for the preprotein-SecB complex and as an ATP-driven molecular motor driving the stepwise translocation of polypeptide chains across the membrane. The protein is Protein translocase subunit SecA 1 of Nitrosospira multiformis (strain ATCC 25196 / NCIMB 11849 / C 71).